Here is a 433-residue protein sequence, read N- to C-terminus: Phosphomethylpyrimidine synthase (433 aa).

Substrate is bound by residues Asn69, Met98, Tyr127, His163, Ser185–Gly187, Asp226–Arg229, and Glu265. Position 269 (His269) interacts with Zn(2+). Tyr292 contributes to the substrate binding site. His333 lines the Zn(2+) pocket. The [4Fe-4S] cluster site is built by Cys409, Cys412, and Cys416.

This sequence belongs to the ThiC family. The cofactor is [4Fe-4S] cluster.

The catalysed reaction is 5-amino-1-(5-phospho-beta-D-ribosyl)imidazole + S-adenosyl-L-methionine = 4-amino-2-methyl-5-(phosphooxymethyl)pyrimidine + CO + 5'-deoxyadenosine + formate + L-methionine + 3 H(+). It functions in the pathway cofactor biosynthesis; thiamine diphosphate biosynthesis. Functionally, catalyzes the synthesis of the hydroxymethylpyrimidine phosphate (HMP-P) moiety of thiamine from aminoimidazole ribotide (AIR) in a radical S-adenosyl-L-methionine (SAM)-dependent reaction. The polypeptide is Phosphomethylpyrimidine synthase (Clostridioides difficile (strain 630) (Peptoclostridium difficile)).